We begin with the raw amino-acid sequence, 288 residues long: N-acetylneuraminate lyase (288 aa).

Aceneuramate contacts are provided by serine 44 and threonine 45. The Proton donor role is filled by tyrosine 133. Lysine 161 acts as the Schiff-base intermediate with substrate in catalysis. Threonine 163, glycine 185, aspartate 187, glutamate 188, and serine 204 together coordinate aceneuramate.

Belongs to the DapA family. NanA subfamily. As to quaternary structure, homotetramer.

The protein localises to the cytoplasm. It carries out the reaction aceneuramate = aldehydo-N-acetyl-D-mannosamine + pyruvate. It functions in the pathway amino-sugar metabolism; N-acetylneuraminate degradation; D-fructose 6-phosphate from N-acetylneuraminate: step 1/5. In terms of biological role, catalyzes the reversible aldol cleavage of N-acetylneuraminic acid (sialic acid; Neu5Ac) to form pyruvate and N-acetylmannosamine (ManNAc) via a Schiff base intermediate. The protein is N-acetylneuraminate lyase of Clostridium perfringens (strain SM101 / Type A).